The following is a 578-amino-acid chain: Putative multidrug export ATP-binding/permease protein SAB1799c (578 aa).

At 1 to 15 the chain is on the cytoplasmic side; sequence MIKRYLQFVKPYKYR. The chain crosses the membrane as a helical span at residues 16-36; the sequence is IFATIIVGIIKFGIPMLIPLL. The ABC transmembrane type-1 domain occupies 16-306; it reads IFATIIVGII…LVASFTTLTQ (291 aa). Over 37-59 the chain is Extracellular; that stretch reads IKYAIDGVINNHALTTDEKVHHL. The helical transmembrane segment at 60 to 80 threads the bilayer; it reads TIAIGIALFIFVIVRPPIEFI. Over 81-138 the chain is Cytoplasmic; the sequence is RQYLAQWTSNKILYDIRKKLYNHLQALSARFYANNQVGQVISRVINDVEQTKDFILTG. The chain crosses the membrane as a helical span at residues 139-159; sequence LMNIWLDCITIIIALSIMFFL. Residues 160-162 lie on the Extracellular side of the membrane; that stretch reads DVK. Residues 163–183 form a helical membrane-spanning segment; it reads LTLAALFIFPFYILTVYVFFG. At 184–242 the chain is on the cytoplasmic side; sequence RLRKLTRERSQALAEVQGFLHERVQGISVVKSFAIEDNEAKNFDKKNANFLTRALKHTR. The helical transmembrane segment at 243 to 262 threads the bilayer; it reads WNAYSFATINTVTDIGPIIV. The Extracellular portion of the chain corresponds to 263 to 267; the sequence is IGVGA. Residues 268–287 traverse the membrane as a helical segment; the sequence is YLAISGSITVGTLAAFVGYL. The Cytoplasmic portion of the chain corresponds to 288-578; the sequence is ELLFGPLRRL…YEHLYSIQNL (291 aa). The 236-residue stretch at 340 to 575 folds into the ABC transporter domain; the sequence is IDIYHVNFQY…QGAYEHLYSI (236 aa). An ATP-binding site is contributed by 374–381; sequence GMSGGGKS.

Belongs to the ABC transporter superfamily. Homodimer.

The protein resides in the cell membrane. Its function is as follows. May be involved in multidrug export. Transmembrane domains (TMD) form a pore in the cell membrane and the ATP-binding domain (NBD) is responsible for energy generation. The chain is Putative multidrug export ATP-binding/permease protein SAB1799c from Staphylococcus aureus (strain bovine RF122 / ET3-1).